The sequence spans 182 residues: Hypoxanthine/guanine phosphoribosyltransferase (182 aa).

The protein belongs to the purine/pyrimidine phosphoribosyltransferase family. Archaeal HPRT subfamily. As to quaternary structure, homodimer.

The protein resides in the cytoplasm. The catalysed reaction is IMP + diphosphate = hypoxanthine + 5-phospho-alpha-D-ribose 1-diphosphate. The enzyme catalyses GMP + diphosphate = guanine + 5-phospho-alpha-D-ribose 1-diphosphate. It functions in the pathway purine metabolism; IMP biosynthesis via salvage pathway; IMP from hypoxanthine: step 1/1. In terms of biological role, catalyzes a salvage reaction resulting in the formation of IMP that is energically less costly than de novo synthesis. In Methanospirillum hungatei JF-1 (strain ATCC 27890 / DSM 864 / NBRC 100397 / JF-1), this protein is Hypoxanthine/guanine phosphoribosyltransferase.